Here is a 528-residue protein sequence, read N- to C-terminus: UDP-glucuronosyltransferase 2B10 (528 aa).

The signal sequence occupies residues 1-23 (MALKWTTVLLIQLSFYFSSGSCG). Asn-66 carries an N-linked (GlcNAc...) asparagine glycan. Lys-134 is modified (N6-succinyllysine). Asn-314 and Asn-481 each carry an N-linked (GlcNAc...) asparagine glycan. The helical transmembrane segment at 492–512 (VIGFLLACVATVLFIITKCCL) threads the bilayer.

The protein belongs to the UDP-glycosyltransferase family.

Its subcellular location is the microsome membrane. It is found in the endoplasmic reticulum membrane. It catalyses the reaction glucuronate acceptor + UDP-alpha-D-glucuronate = acceptor beta-D-glucuronoside + UDP + H(+). UDPGT is of major importance in the conjugation and subsequent elimination of potentially toxic xenobiotics and endogenous compounds. In Homo sapiens (Human), this protein is UDP-glucuronosyltransferase 2B10 (UGT2B10).